The chain runs to 729 residues: Putative cyclic nucleotide-gated ion channel 19 (729 aa).

Residues 1–172 are Cytoplasmic-facing; that stretch reads MAHTRTFTSR…SKFVQVWTRV (172 aa). The disordered stretch occupies residues 52–82; sequence SGPIHSTRRTEPLFSPSPQESPDSSSTVDVP. The span at 67–81 shows a compositional bias: low complexity; it reads PSPQESPDSSSTVDV. A helical transmembrane segment spans residues 173–193; that stretch reads LAFSSLVAIFIDPLFFFLLLI. Residues 194 to 208 are Extracellular-facing; that stretch reads QQDNKCIAIDWRATK. The chain crosses the membrane as a helical span at residues 209–229; it reads VLVSLRSITDLIFFINILLQF. Residues 230–261 are Cytoplasmic-facing; sequence RLAYVAPESRIVGAGQLVDHPRKIARHYFRGK. A helical membrane pass occupies residues 262–282; the sequence is FLLDMFIVFPIPQIMILRIIP. Residues 283–295 lie on the Extracellular side of the membrane; sequence LHLGTRREESEKQ. The chain crosses the membrane as a helical span at residues 296-316; sequence ILRATVLFQYIPKLYRLLPLL. At 317 to 332 the chain is on the cytoplasmic side; sequence AGQTSTGFIFESAWAN. The chain crosses the membrane as a helical span at residues 333 to 353; sequence FVINLLTFMLAGHAVGSCWYL. The Extracellular segment spans residues 354 to 451; it reads SALQRVKKCM…STLAGNLSPS (98 aa). The helical transmembrane segment at 452–472 threads the bilayer; the sequence is YSVGEVFFTMGIIGLGLLLFA. Residues 473 to 729 are Cytoplasmic-facing; that stretch reads RLIGNMHNFL…LNTAHSNSNR (257 aa). A nucleoside 3',5'-cyclic phosphate-binding positions include 560-677 and glutamate 625; that span reads IFSL…VTSL. Residues 678-694 form a calmodulin-binding region; it reads FSRFLRSHRVQGAIRYE. The 30-residue stretch at 699–728 folds into the IQ domain; sequence RLRAAMQIQVAWRYRKRQLQRLNTAHSNSN.

The protein belongs to the cyclic nucleotide-gated cation channel (TC 1.A.1.5) family. Homotetramer or heterotetramer.

It is found in the cell membrane. Putative cyclic nucleotide-gated ion channel. The protein is Putative cyclic nucleotide-gated ion channel 19 (CNGC19) of Arabidopsis thaliana (Mouse-ear cress).